Here is a 202-residue protein sequence, read N- to C-terminus: Ribosome maturation factor RimM (202 aa).

The PRC barrel domain maps to 121–202 (ADEYYWVDLI…CITVDWQPDY (82 aa)).

It belongs to the RimM family. As to quaternary structure, binds ribosomal protein uS19.

Its subcellular location is the cytoplasm. In terms of biological role, an accessory protein needed during the final step in the assembly of 30S ribosomal subunit, possibly for assembly of the head region. Essential for efficient processing of 16S rRNA. May be needed both before and after RbfA during the maturation of 16S rRNA. It has affinity for free ribosomal 30S subunits but not for 70S ribosomes. This chain is Ribosome maturation factor RimM, found in Polaromonas naphthalenivorans (strain CJ2).